The sequence spans 199 residues: UPF0462 protein C4orf33 homolog (199 aa).

This sequence belongs to the UPF0462 family.

This Rattus norvegicus (Rat) protein is UPF0462 protein C4orf33 homolog.